A 173-amino-acid chain; its full sequence is Alpha-crystallin A chain (173 aa).

Met1 carries the post-translational modification N-acetylmethionine. One can recognise a sHSP domain in the interval Leu52–Ser162. His100, Glu102, His107, and His154 together coordinate Zn(2+). A disordered region spans residues Met146–Ser173. A compositionally biased stretch (basic and acidic residues) spans Ser153 to Pro167.

This sequence belongs to the small heat shock protein (HSP20) family. In terms of assembly, heteropolymer composed of three CRYAA and one CRYAB subunits. Inter-subunit bridging via zinc ions enhances stability, which is crucial as there is no protein turn over in the lens. Can also form homodimers and homotetramers (dimers of dimers) which serve as the building blocks of homooligomers. Within homooligomers, the zinc-binding motif is created from residues of 3 different molecules. His-100 and Glu-102 from one molecule are ligands of the zinc ion, and His-107 and His-154 residues from additional molecules complete the site with tetrahedral coordination geometry.

It localises to the cytoplasm. It is found in the nucleus. In terms of biological role, contributes to the transparency and refractive index of the lens. May act as a chaperone, preventing aggregation of various proteins under a wide range of stress conditions. The polypeptide is Alpha-crystallin A chain (CRYAA) (Aquarana catesbeiana (American bullfrog)).